Consider the following 349-residue polypeptide: N-acetyltaurine hydrolase (349 aa).

Residues H26, H28, E169, H201, H230, and D298 each contribute to the a divalent metal cation site.

This sequence belongs to the metallo-dependent hydrolases superfamily. Phosphotriesterase family. Requires a divalent metal cation as cofactor. Expressed primarily in proximal tubules of the kidney.

The protein resides in the cytoplasm. Its subcellular location is the cytosol. It carries out the reaction N-acetyltaurine + H2O = taurine + acetate. The enzyme catalyses N-propanoyltaurine + H2O = propanoate + taurine. The catalysed reaction is N-acetyl-L-methionine + H2O = L-methionine + acetate. It catalyses the reaction N-acetyl-L-isoleucine + H2O = L-isoleucine + acetate. It carries out the reaction N-acetyl-L-leucine + H2O = L-leucine + acetate. The enzyme catalyses N-acetyl-L-valine + H2O = L-valine + acetate. In terms of biological role, N-acetyltaurine hydrolase that regulates feeding by catalyzing the hydrolysis of N-acetyltaurine into taurine and acetate. N-acetyltaurine has anorexigenic and anti-obesity effects that are dependent on GFRAL receptor and GDF15. PTER also acts on other N-acetyl amino acids (Met, Ile, Leu, Val) and N-propionyltaurine, but at lower rates. Binds resiniferotoxin, a vanilloid that desensitizes nociceptive neurons. The sequence is that of N-acetyltaurine hydrolase from Rattus norvegicus (Rat).